The primary structure comprises 119 residues: Autophagy-related protein 8C-like (119 aa).

Residue G117 is the site of Phosphatidylethanolamine amidated glycine attachment. Positions 118–119 (SF) are cleaved as a propeptide — removed in mature form.

Belongs to the ATG8 family. Interacts with ATG4. Interacts with the Phytophtora infestans effector PexRD54. Interacts with JOKA2. Post-translationally, the C-terminal 2 residues are removed by ATG4 to expose Gly-117 at the C-terminus. The C-terminal Gly is then amidated with phosphatidylethanolamine by an activating system similar to that for ubiquitin. The phosphatidylethanolamine amidated glycine is required for autophagosome formation.

It localises to the cytoplasmic vesicle. The protein localises to the autophagosome membrane. It is found in the vacuole membrane. The protein resides in the cytoplasm. Its subcellular location is the cytoskeleton. Ubiquitin-like modifier involved in autophagosomes formation. May mediate the delivery of the autophagosomes to the vacuole via the microtubule cytoskeleton. ATG8CL-mediated selective autophagy contributes to defense against the fungal pathogen Phytophtora infestans. In Solanum tuberosum (Potato), this protein is Autophagy-related protein 8C-like.